Here is a 561-residue protein sequence, read N- to C-terminus: MKYIVMQDAFFVVLLLVLAVPLGIYMYKVMIGEKVFLSRVLEPVERFGYRLMGVSEVGMSAKRYAVSVLAFSAVGFVFVMAVLMLQGFLPLNPEGMKGLSFSLAFNTAASFVSNTNWQAYSGEAALSYFSQSIGLTVQNFVSAATGIAVLFAVIRGFIWKKQKTIGNFWQDLFRVTLYILLPLSLILALLLVSQGVVQSFADYSVVETLENGAKQLIPLGPAASQIAIKQLGTNGGGFFGANSAFPFENPSSFTNLIEMLAILLIPVALVVMFGRAVKDSKQGRAIMTAMMIVFVIGVVAITISEQFAGPHYQGVATSGSMEGKEVRFGVGGSSLFAASTTAASNGAVNAMHDSLTPLGGLVPMFFMQLGEVIFGGVGSGLYGMIGFIILTVFIAGLLVGRTPEYLGKKIEPYDMKMVCLLILVPPLLTLFGTAVAVMMPSVQASVSASGAHGFSEVLYAFTSMGNNNGSAFAGFAADTTFTNMVGAVMMLLARFIPLVAALYLAQNMAGKSSVAASSGTLSTKNGMFIGLLIGVVVLVGALSFLPALALGPIADFFTTFK.

The next 10 helical transmembrane spans lie at I4 to I24, A65 to L85, I133 to V153, L177 to V197, F253 to F273, A285 to E305, G380 to G400, M417 to V437, M484 to L504, and F528 to L548.

Belongs to the KdpA family. The system is composed of three essential subunits: KdpA, KdpB and KdpC.

It is found in the cell membrane. Functionally, part of the high-affinity ATP-driven potassium transport (or Kdp) system, which catalyzes the hydrolysis of ATP coupled with the electrogenic transport of potassium into the cytoplasm. This subunit binds the extracellular potassium ions and delivers the ions to the membrane domain of KdpB through an intramembrane tunnel. This Listeria monocytogenes serotype 4b (strain F2365) protein is Potassium-transporting ATPase potassium-binding subunit.